Here is a 494-residue protein sequence, read N- to C-terminus: Glutamyl-tRNA(Gln) amidotransferase subunit A (494 aa).

Residues Lys-78 and Ser-158 each act as charge relay system in the active site. Catalysis depends on Ser-182, which acts as the Acyl-ester intermediate.

This sequence belongs to the amidase family. GatA subfamily. As to quaternary structure, heterotrimer of A, B and C subunits.

It catalyses the reaction L-glutamyl-tRNA(Gln) + L-glutamine + ATP + H2O = L-glutaminyl-tRNA(Gln) + L-glutamate + ADP + phosphate + H(+). Allows the formation of correctly charged Gln-tRNA(Gln) through the transamidation of misacylated Glu-tRNA(Gln) in organisms which lack glutaminyl-tRNA synthetase. The reaction takes place in the presence of glutamine and ATP through an activated gamma-phospho-Glu-tRNA(Gln). The polypeptide is Glutamyl-tRNA(Gln) amidotransferase subunit A (Jannaschia sp. (strain CCS1)).